The chain runs to 161 residues: Lipoprotein signal peptidase (161 aa).

3 consecutive transmembrane segments (helical) span residues 9–29 (WLWL…LVVE), 64–84 (WQKY…ANVL), and 96–113 (MAYA…IDRA). Residues Asp-120 and Asp-138 contribute to the active site. A helical transmembrane segment spans residues 133–153 (VFNIADVAIVMGAGLLILETF).

This sequence belongs to the peptidase A8 family.

Its subcellular location is the cell inner membrane. The enzyme catalyses Release of signal peptides from bacterial membrane prolipoproteins. Hydrolyzes -Xaa-Yaa-Zaa-|-(S,diacylglyceryl)Cys-, in which Xaa is hydrophobic (preferably Leu), and Yaa (Ala or Ser) and Zaa (Gly or Ala) have small, neutral side chains.. The protein operates within protein modification; lipoprotein biosynthesis (signal peptide cleavage). Functionally, this protein specifically catalyzes the removal of signal peptides from prolipoproteins. The sequence is that of Lipoprotein signal peptidase from Haemophilus ducreyi (strain 35000HP / ATCC 700724).